Here is a 1024-residue protein sequence, read N- to C-terminus: Translation initiation factor IF-2 (1024 aa).

The disordered stretch occupies residues 33 to 425; that stretch reads SHMSSLEDDT…GRVKKTKTMK (393 aa). Composition is skewed to basic and acidic residues over residues 43–62, 135–148, 167–198, and 223–263; these read EARV…DTRV, TPED…ELKP, TPAK…KETS, and SKPD…KEVR. The span at 316–325 shows a compositional bias: polar residues; that stretch reads EATQAPTSPQ. Over residues 332 to 350 the composition is skewed to basic and acidic residues; that stretch reads KPADKGPARAQAHRPDTGR. The span at 365-375 shows a compositional bias: basic residues; sequence RSKKKEWKKKG. The span at 394-406 shows a compositional bias: basic and acidic residues; the sequence is SVVEGKDLYEKGR. A compositionally biased stretch (basic residues) spans 407–423; the sequence is SGKKGRRKDGRVKKTKT. The 170-residue stretch at 518–687 folds into the tr-type G domain; that stretch reads SRPPVVTIMG…LLQSEVLELK (170 aa). Positions 527 to 534 are G1; the sequence is GHVDHGKT. GTP is bound at residue 527–534; sequence GHVDHGKT. The G2 stretch occupies residues 552–556; it reads GITQH. Residues 573 to 576 are G3; sequence DTPG. GTP-binding positions include 573-577 and 627-630; these read DTPGH and NKMD. A G4 region spans residues 627–630; that stretch reads NKMD. Positions 663–665 are G5; the sequence is SAK.

Belongs to the TRAFAC class translation factor GTPase superfamily. Classic translation factor GTPase family. IF-2 subfamily.

It is found in the cytoplasm. One of the essential components for the initiation of protein synthesis. Protects formylmethionyl-tRNA from spontaneous hydrolysis and promotes its binding to the 30S ribosomal subunits. Also involved in the hydrolysis of GTP during the formation of the 70S ribosomal complex. In Desulforapulum autotrophicum (strain ATCC 43914 / DSM 3382 / VKM B-1955 / HRM2) (Desulfobacterium autotrophicum), this protein is Translation initiation factor IF-2.